Consider the following 1264-residue polypeptide: ATP-dependent helicase/nuclease subunit A (1264 aa).

The 471-residue stretch at 12-482 folds into the UvrD-like helicase ATP-binding domain; it reads EQFTDSQWQA…IILAENFRSR (471 aa). 33-40 lines the ATP pocket; it reads ASAGSGKT. Residues 520 to 808 form the UvrD-like helicase C-terminal domain; sequence SEAADYSTEL…RVMTIHASKG (289 aa).

The protein belongs to the helicase family. AddA subfamily. In terms of assembly, heterodimer of AddA and AddB/RexB. The cofactor is Mg(2+).

It catalyses the reaction Couples ATP hydrolysis with the unwinding of duplex DNA by translocating in the 3'-5' direction.. It carries out the reaction ATP + H2O = ADP + phosphate + H(+). In terms of biological role, the heterodimer acts as both an ATP-dependent DNA helicase and an ATP-dependent, dual-direction single-stranded exonuclease. Recognizes the chi site generating a DNA molecule suitable for the initiation of homologous recombination. The AddA nuclease domain is required for chi fragment generation; this subunit has the helicase and 3' -&gt; 5' nuclease activities. This chain is ATP-dependent helicase/nuclease subunit A, found in Enterococcus faecalis (strain ATCC 700802 / V583).